The following is a 286-amino-acid chain: Oxidase hkm6 (286 aa).

Histidine 16, histidine 25, and histidine 215 together coordinate Cu cation.

The protein belongs to the tyrosinase family. Cu(2+) serves as cofactor.

Its pathway is secondary metabolite biosynthesis. Oxidase; part of the gene cluster that mediates the biosynthesis of hancockiamides, an unusual new family of N-cinnamoylated piperazines. The NRPS hkm10 and the NmrA-like reductase hkm9 are proposed to convert two molecules of L-Phe to the intermediary piperazine called xenocockiamide A. Xenocockiamide A is then converted to hancockiamide D via a series of hydroxylations and O-methylations. The tyrosinase hkm6 may catalyze an aromatic hydroxylation, then the 2-oxoglutarate-dependent Fe(II) dioxygenase hkm4 and the FAD-dependent phenol hydroxylase hkm7 may catalyze consecutive hydroxylations to install 2 more hydroxy groups, and the methyltransferase hkm8 probably catalyzes two methylations using 2 molecules of S-adenosyl-L-methionine (SAM). The NRPS hkm11 activates and transfers trans-cinnamate supplied by the PAL hkm12 to hancockiamide D and produces hancockiamide A. NRPS Hkm11 has the flexibility to tolerate the bulky hancockiamide G as a substrate and the absence of the acetyl-transferase hkm3 opens up the opportunity for hkm11 to introduce a second N-cinnamoyl moiety. The cytochrome P450 monooxygenase hkm5 catalyzes the methylenedioxy bridge formation, converting hancockiamide A into hancockiamide G. Hkm5 can also convert hancockiamide B into hancockiamide C, and hancockiamide D into hancockiamide H. The N-acetyltransferase hkm3 finally transfers an acetyl group to 1-N of piperazine, converting hancockiamide A into hancockiamide B and hancockiamide G into hancockiamide C. This chain is Oxidase hkm6, found in Aspergillus hancockii.